We begin with the raw amino-acid sequence, 286 residues long: Octanoyltransferase (286 aa).

In terms of domain architecture, BPL/LPL catalytic spans 50 to 278 (LRTPDELWIV…NIAQRHAGVI (229 aa)). Substrate is bound by residues 89-96 (RGGQVTWH), 190-192 (SLG), and 203-205 (GVA). C221 serves as the catalytic Acyl-thioester intermediate.

Belongs to the LipB family.

It is found in the cytoplasm. It catalyses the reaction octanoyl-[ACP] + L-lysyl-[protein] = N(6)-octanoyl-L-lysyl-[protein] + holo-[ACP] + H(+). Its pathway is protein modification; protein lipoylation via endogenous pathway; protein N(6)-(lipoyl)lysine from octanoyl-[acyl-carrier-protein]: step 1/2. Functionally, catalyzes the transfer of endogenously produced octanoic acid from octanoyl-acyl-carrier-protein onto the lipoyl domains of lipoate-dependent enzymes. Lipoyl-ACP can also act as a substrate although octanoyl-ACP is likely to be the physiological substrate. In Psychrobacter arcticus (strain DSM 17307 / VKM B-2377 / 273-4), this protein is Octanoyltransferase.